Consider the following 460-residue polypeptide: tRNA modification GTPase MnmE (460 aa).

Positions 24, 81, and 121 each coordinate (6S)-5-formyl-5,6,7,8-tetrahydrofolate. The TrmE-type G domain occupies 218-384 (GLVVAIAGPP…MVEALAGFAA (167 aa)). GTP-binding positions include 228–233 (NVGKST), 247–253 (SPHAGTT), and 272–275 (DTAG). Mg(2+) is bound by residues Ser232 and Thr253. Lys460 serves as a coordination point for (6S)-5-formyl-5,6,7,8-tetrahydrofolate.

The protein belongs to the TRAFAC class TrmE-Era-EngA-EngB-Septin-like GTPase superfamily. TrmE GTPase family. As to quaternary structure, homodimer. Heterotetramer of two MnmE and two MnmG subunits. K(+) is required as a cofactor.

The protein localises to the cytoplasm. Exhibits a very high intrinsic GTPase hydrolysis rate. Involved in the addition of a carboxymethylaminomethyl (cmnm) group at the wobble position (U34) of certain tRNAs, forming tRNA-cmnm(5)s(2)U34. The sequence is that of tRNA modification GTPase MnmE from Rhodopseudomonas palustris (strain HaA2).